Here is a 360-residue protein sequence, read N- to C-terminus: UDP-N-acetylglucosamine--N-acetylmuramyl-(pentapeptide) pyrophosphoryl-undecaprenol N-acetylglucosamine transferase (360 aa).

Residues 11–13, Asn-117, Arg-160, Ser-192, and Gln-294 contribute to the UDP-N-acetyl-alpha-D-glucosamine site; that span reads TGG.

Belongs to the glycosyltransferase 28 family. MurG subfamily.

It is found in the cell inner membrane. The catalysed reaction is di-trans,octa-cis-undecaprenyl diphospho-N-acetyl-alpha-D-muramoyl-L-alanyl-D-glutamyl-meso-2,6-diaminopimeloyl-D-alanyl-D-alanine + UDP-N-acetyl-alpha-D-glucosamine = di-trans,octa-cis-undecaprenyl diphospho-[N-acetyl-alpha-D-glucosaminyl-(1-&gt;4)]-N-acetyl-alpha-D-muramoyl-L-alanyl-D-glutamyl-meso-2,6-diaminopimeloyl-D-alanyl-D-alanine + UDP + H(+). It participates in cell wall biogenesis; peptidoglycan biosynthesis. Cell wall formation. Catalyzes the transfer of a GlcNAc subunit on undecaprenyl-pyrophosphoryl-MurNAc-pentapeptide (lipid intermediate I) to form undecaprenyl-pyrophosphoryl-MurNAc-(pentapeptide)GlcNAc (lipid intermediate II). The protein is UDP-N-acetylglucosamine--N-acetylmuramyl-(pentapeptide) pyrophosphoryl-undecaprenol N-acetylglucosamine transferase of Rickettsia felis (strain ATCC VR-1525 / URRWXCal2) (Rickettsia azadi).